Reading from the N-terminus, the 677-residue chain is UvrABC system protein B (677 aa).

The Helicase ATP-binding domain occupies 27 to 414 (ANLGHGVRDQ…SQGVIAEQII (388 aa)). Residue 40–47 (GVTGSGKT) participates in ATP binding. Positions 93 to 116 (YYDYYQPEAYVPASDTYIEKDSSI) match the Beta-hairpin motif. Residues 432-594 (QVDDLLAECR…IEPRTIRKSL (163 aa)) enclose the Helicase C-terminal domain. The UVR domain occupies 638 to 673 (AKHIQKLEREMREAAKELEFERAATLRDRIRLLRER).

Belongs to the UvrB family. As to quaternary structure, forms a heterotetramer with UvrA during the search for lesions. Interacts with UvrC in an incision complex.

The protein localises to the cytoplasm. The UvrABC repair system catalyzes the recognition and processing of DNA lesions. A damage recognition complex composed of 2 UvrA and 2 UvrB subunits scans DNA for abnormalities. Upon binding of the UvrA(2)B(2) complex to a putative damaged site, the DNA wraps around one UvrB monomer. DNA wrap is dependent on ATP binding by UvrB and probably causes local melting of the DNA helix, facilitating insertion of UvrB beta-hairpin between the DNA strands. Then UvrB probes one DNA strand for the presence of a lesion. If a lesion is found the UvrA subunits dissociate and the UvrB-DNA preincision complex is formed. This complex is subsequently bound by UvrC and the second UvrB is released. If no lesion is found, the DNA wraps around the other UvrB subunit that will check the other stand for damage. The sequence is that of UvrABC system protein B from Nitratidesulfovibrio vulgaris (strain ATCC 29579 / DSM 644 / CCUG 34227 / NCIMB 8303 / VKM B-1760 / Hildenborough) (Desulfovibrio vulgaris).